A 151-amino-acid chain; its full sequence is Deoxyuridine 5'-triphosphate nucleotidohydrolase (151 aa).

Residues 70–72 (RSG), N83, 87–89 (LID), and M97 contribute to the substrate site.

Belongs to the dUTPase family. The cofactor is Mg(2+).

The enzyme catalyses dUTP + H2O = dUMP + diphosphate + H(+). It functions in the pathway pyrimidine metabolism; dUMP biosynthesis; dUMP from dCTP (dUTP route): step 2/2. Functionally, this enzyme is involved in nucleotide metabolism: it produces dUMP, the immediate precursor of thymidine nucleotides and it decreases the intracellular concentration of dUTP so that uracil cannot be incorporated into DNA. This Shigella flexneri serotype 5b (strain 8401) protein is Deoxyuridine 5'-triphosphate nucleotidohydrolase.